The sequence spans 497 residues: Homeotic protein empty spiracles (497 aa).

3 disordered regions span residues 34 to 117 (NDVS…HLSP), 161 to 262 (SPLQ…MMMP), and 441 to 497 (NRRT…DASH). Over residues 35 to 50 (DVSTAGGNSTPDLSGP) the composition is skewed to polar residues. The segment covering 51–68 (QSPPPGERNVPGSPPQTP) has biased composition (pro residues). The segment covering 96 to 117 (PHAQQQQQQHLQAPHPHPHLSP) has biased composition (low complexity). The span at 161–176 (SPLQTRLSPETEQPQM) shows a compositional bias: polar residues. 2 stretches are compositionally biased toward low complexity: residues 208-239 (PKSV…QQQQ) and 248-262 (PAMM…MMMP). The homeobox DNA-binding region spans 391-450 (PKRIRTAFSPSQLLKLEHAFESNQYVVGAERKALAQNLNLSETQVKVWFQNRRTKHKRMQ). The span at 470-497 (GDEDDDELIDMEMDECPSDEEHELDASH) shows a compositional bias: acidic residues.

It belongs to the EMX homeobox family.

Its subcellular location is the nucleus. Acts as a homeotic selector gene controlling antennal and mandibular segment identity. The sequence is that of Homeotic protein empty spiracles (ems) from Drosophila melanogaster (Fruit fly).